A 61-amino-acid polypeptide reads, in one-letter code: Photosystem II reaction center protein K (61 aa).

The propeptide occupies 1 to 24 (MPNILSLTCICFNSVLYPTSFFFA). A helical transmembrane segment spans residues 32 to 52 (IFNPIVDIMPVIPLFFFLLAF).

This sequence belongs to the PsbK family. PSII is composed of 1 copy each of membrane proteins PsbA, PsbB, PsbC, PsbD, PsbE, PsbF, PsbH, PsbI, PsbJ, PsbK, PsbL, PsbM, PsbT, PsbX, PsbY, PsbZ, Psb30/Ycf12, at least 3 peripheral proteins of the oxygen-evolving complex and a large number of cofactors. It forms dimeric complexes. Detected in both etioplasts and green leaves; PSII is only assembled in green leaves.

The protein localises to the plastid. It localises to the chloroplast thylakoid membrane. One of the components of the core complex of photosystem II (PSII). PSII is a light-driven water:plastoquinone oxidoreductase that uses light energy to abstract electrons from H(2)O, generating O(2) and a proton gradient subsequently used for ATP formation. It consists of a core antenna complex that captures photons, and an electron transfer chain that converts photonic excitation into a charge separation. The sequence is that of Photosystem II reaction center protein K from Hordeum vulgare (Barley).